Here is a 337-residue protein sequence, read N- to C-terminus: ADP-ribosylation factor GTPase-activating protein AGD12 (337 aa).

The region spanning 15-137 (KRRIRDLLTQ…EFLKPSLRIT (123 aa)) is the Arf-GAP domain. The C4-type zinc finger occupies 30–53 (CADCGAPDPKWASANIGVFICLKC). The C2 domain occupies 164-281 (TNSSSQQPQL…AMAFGDPEMF (118 aa)). Positions 250, 253, and 256 each coordinate Ca(2+).

Ca(2+) is required as a cofactor. In terms of tissue distribution, expressed in roots, leaves, flowers and siliques. Low levels of expression in seeds and stems.

Its subcellular location is the golgi apparatus. The protein resides in the cell membrane. Functionally, GTPase-activating protein (GAP) for ADP ribosylation factor (ARF). Binds phosphatidylinositol 3-monophosohate (PI-3-P) and anionic phospholipids. This Arabidopsis thaliana (Mouse-ear cress) protein is ADP-ribosylation factor GTPase-activating protein AGD12 (AGD12).